The chain runs to 69 residues: Microcin H47 immunity protein MchI (69 aa).

At 1 to 6 (MSYKKL) the chain is on the cytoplasmic side. Residues 7 to 29 (YQLTAIFSLPLTILLVSLSSLRI) traverse the membrane as a helical segment. At 30–38 (VGEGNSYVD) the chain is on the periplasmic side. The chain crosses the membrane as a helical span at residues 39–61 (VFLSFIIFLGFIELIHGIRKILV). Over 62 to 69 (WSGWKNGS) the chain is Cytoplasmic.

Its subcellular location is the cell membrane. Its function is as follows. Protects a microcin H47-producer cell against microcin H47. This is Microcin H47 immunity protein MchI (mchI) from Escherichia coli.